The sequence spans 362 residues: MITNKVKTLILVNLGGPRTPSEIEVFLRDLFSDPFVFDLPLPEFLRLRLARFIAKKRAPKVQKSYESMGFGGGSPLVEETAKQAHALELALNERSSEQWNVKVAMACGYPNMRDIEFGKPNQDTVYLPLYPQFSRSTVLSTLAILETKFGECPVGSGGYVPHFGLDPNFHSISAKFIYEFFTNQLPKDQYLHYPEEKPNCDWRNLDLVFSAHGVPMRLIHKGDRYMEEVELSVKGIADELSKFGFNGGVHISYQSKVGPAKWTEPSTIQMISSLAKQGKHIAVYPISFVSDHIETLEEIGEQFKDLTWEMGGKSFVRIPALGIYPSFIQFLAEKVMHSDRKIQHCICREKGGESLQHCRFKD.

Fe cation contacts are provided by histidine 212 and glutamate 294.

The protein belongs to the ferrochelatase family.

The protein localises to the cytoplasm. It carries out the reaction heme b + 2 H(+) = protoporphyrin IX + Fe(2+). It participates in porphyrin-containing compound metabolism; protoheme biosynthesis; protoheme from protoporphyrin-IX: step 1/1. Functionally, catalyzes the ferrous insertion into protoporphyrin IX. The sequence is that of Ferrochelatase from Leptospira biflexa.